We begin with the raw amino-acid sequence, 243 residues long: uncharacterized protein (243 aa).

The VWFA domain maps to 26 to 204 (RVGLVLDITG…ISDDELYDAL (179 aa)). Positions 222–243 (REQEPPAEKPKKKGFFSRLFSK) are disordered. A compositionally biased stretch (basic residues) spans 231–243 (PKKKGFFSRLFSK).

This is an uncharacterized protein from Bacillus subtilis (strain 168).